Reading from the N-terminus, the 448-residue chain is Divalent metal cation transporter MntH (448 aa).

Residues 1 to 10 (MKKDKTERTK) are compositionally biased toward basic and acidic residues. The tract at residues 1–20 (MKKDKTERTKQSWRKAQNAP) is disordered. The next 11 membrane-spanning stretches (helical) occupy residues 41 to 61 (LFAFMGPGALIAVGYVDPGNW), 69 to 89 (SEFGYTLLSVILISNILAVLL), 117 to 137 (GFVLWILAELAIIATDIAEVI), 147 to 167 (FGIPLIWGVCITALDIFLVLF), 176 to 196 (IEVIVITLMVTILVCFGAEMV), 215 to 235 (IVTNPAMLYIALGILGATVMP), 270 to 290 (FSLTIALLINASILILAAAAF), 307 to 327 (LLNPTLGSSIASTVFAVALLA), 363 to 383 (VLAIVPAVIITALYGANGINE), 384 to 404 (LLIFSQVILSMQLSFAVIPLV), and 424 to 444 (IISWAVAIFIAVLNIYLLFYT).

The protein belongs to the NRAMP family.

It localises to the cell membrane. In terms of biological role, h(+)-stimulated, divalent metal cation uptake system. The polypeptide is Divalent metal cation transporter MntH (Listeria monocytogenes serotype 4b (strain CLIP80459)).